The following is a 367-amino-acid chain: MEAEVINQLNNTLNDLEKRSEDIRVYMDYQGKKDRLEEVIGLSEDPELWNDPKRAQEIGKESKILEGIVLTLDNIASGIEDNRMLIEMAVEENDEEGFAAVKEDVAGLEKQMADLEFKRMFNQPADPNNCFIDITAGAGGTEAEDWAGMLFRMYSRYAERKGFKIEILEEDDGEIAGINRATIRVEGEYAYGLLRTETGVHRLVRYSPFDSNNKRHTSFASVFVYPEIDDSIEIEINPADLRIDTYRASGAGGQHINKTDSAVRITHEPTGIVVQCQNDRSQHANKAAAMEMLKSKLYELEMRKRNEEKQALEEGKSDVGWGSQIRSYVLDSSRIKDLRTGYEVGNTKAVLDGDLDGFIEASLKQGV.

N5-methylglutamine is present on Gln254.

The protein belongs to the prokaryotic/mitochondrial release factor family. Post-translationally, methylated by PrmC. Methylation increases the termination efficiency of RF2.

The protein resides in the cytoplasm. Peptide chain release factor 2 directs the termination of translation in response to the peptide chain termination codons UGA and UAA. This is Peptide chain release factor 2 from Neisseria gonorrhoeae (strain ATCC 700825 / FA 1090).